A 51-amino-acid chain; its full sequence is U-Asilidin(1)-Mar1a (51 aa).

Positions 1 to 23 are cleaved as a signal peptide; it reads MANYIEVFSVLAIIFATVLAALA. Intrachain disulfides connect Cys-26–Cys-40, Cys-33–Cys-44, and Cys-39–Cys-49.

This sequence belongs to the asilidin-1 family. Expressed by the venom gland. Is the most highly expressed peptide and is around 3000 times higher expressed in the thoracic glands compared to its body tissues.

The protein localises to the secreted. In terms of biological role, induces neurotoxic effect on honeybees, including slow movements, disorientation and paralysis. Since it provokes similar symptoms than omega-atracotoxin, it is probable that it acts in the same way by inhibiting voltage-gated calcium channels. The polypeptide is U-Asilidin(1)-Mar1a (Machimus arthriticus (Breck robberfly)).